The sequence spans 1376 residues: Mediator of RNA polymerase II transcription subunit 23 (1376 aa).

Residues 1346 to 1369 (SNSSSVQQTSSASSPTAQSTAGAA) are compositionally biased toward low complexity. A disordered region spans residues 1346–1376 (SNSSSVQQTSSASSPTAQSTAGAAIPLSVTQ).

It belongs to the Mediator complex subunit 23 family. As to quaternary structure, component of the Mediator complex.

The protein resides in the nucleus. In terms of biological role, component of the Mediator complex, a coactivator involved in the regulated transcription of nearly all RNA polymerase II-dependent genes. Mediator functions as a bridge to convey information from gene-specific regulatory proteins to the basal RNA polymerase II transcription machinery. Mediator is recruited to promoters by direct interactions with regulatory proteins and serves as a scaffold for the assembly of a functional preinitiation complex with RNA polymerase II and the general transcription factors. This is Mediator of RNA polymerase II transcription subunit 23 (med23) from Danio rerio (Zebrafish).